Here is a 457-residue protein sequence, read N- to C-terminus: Autophagy-related protein 14 (457 aa).

Residues 31 to 109 (RIENVMALIE…TRRAALSRRK (79 aa)) adopt a coiled-coil conformation. 3 disordered regions span residues 54–73 (ETNA…QRTA), 252–274 (PSQA…VSRP), and 433–457 (NKNL…VKNR). A compositionally biased stretch (low complexity) spans 253–266 (SQASVSSPSSTTDT).

Belongs to the ATG14 family. In terms of assembly, component of the autophagy-specific VPS34 PI3-kinase complex I.

The protein resides in the preautophagosomal structure membrane. Its subcellular location is the vacuole membrane. In terms of biological role, required for cytoplasm to vacuole transport (Cvt) and autophagy as a part of the autophagy-specific VPS34 PI3-kinase complex I. This complex is essential to recruit the ATG8-phosphatidylinositol conjugate and the ATG12-ATG5 conjugate to the pre-autophagosomal structure. ATG14 mediates the specific binding of the VPS34 PI3-kinase complex I to the preautophagosomal structure (PAS). Autophagy is required for proper vegetative growth, asexual/sexual reproduction, and full virulence. Autophagy is particularly involved in the biosynthesis of deoxynivalenol (DON), an important virulence determinant. This is Autophagy-related protein 14 from Gibberella zeae (strain ATCC MYA-4620 / CBS 123657 / FGSC 9075 / NRRL 31084 / PH-1) (Wheat head blight fungus).